Consider the following 690-residue polypeptide: Subtilisin-like protease 1 (690 aa).

Positions 1 to 25 are cleaved as a signal peptide; that stretch reads MMLNKKVVALCTLTLHLFCIFLCLG. A propeptide spans 26-219 (inhibition peptide); the sequence is KEVRSEENGK…IESDKLVSAD (194 aa). The interval 99-131 is disordered; sequence EKNKNDNHNNNNNNNNISSSSSSSSNTFGEEKE. A compositionally biased stretch (low complexity) spans 106-124; sequence HNNNNNNNNISSSSSSSSN. Asparagine 114 is a glycosylation site (N-linked (GlcNAc...) asparagine). Asparagine 147, threonine 150, and proline 152 together coordinate Ca(2+). N-linked (GlcNAc...) asparagine glycosylation occurs at asparagine 173. Residue glycine 207 coordinates Ca(2+). Residue asparagine 263 is glycosylated (N-linked (GlcNAc...) asparagine). Disordered regions lie at residues 266 to 286 and 305 to 334; these read HAAT…DTFS and NNNN…RPGK. Low complexity predominate over residues 305-330; that stretch reads NNNNYYYSHSSNGHNSSSRNSSSSRS. 2 N-linked (GlcNAc...) asparagine glycosylation sites follow: asparagine 319 and asparagine 324. Glutamate 340 lines the Ca(2+) pocket. Residues 345–663 form the Peptidase S8 domain; the sequence is QWGLDLSRLD…AGYADINKAV (319 aa). 2 disulfide bridges follow: cysteine 371-cysteine 481 and cysteine 460-cysteine 477. Aspartate 374 serves as the catalytic Charge relay system. Ca(2+) contacts are provided by aspartate 383, glutamate 394, arginine 398, phenylalanine 401, aspartate 402, aspartate 403, aspartate 404, asparagine 406, isoleucine 408, aspartate 410, and aspartate 411. Residue asparagine 419 is glycosylated (N-linked (GlcNAc...) asparagine). The active-site Charge relay system is histidine 430. 4 residues coordinate Ca(2+): isoleucine 441, asparagine 444, isoleucine 446, and valine 448. Asparagine 490, asparagine 503, and asparagine 522 each carry an N-linked (GlcNAc...) asparagine glycan. Cysteine 523 and cysteine 536 are disulfide-bonded. Residue asparagine 605 is glycosylated (N-linked (GlcNAc...) asparagine). Serine 608 acts as the Charge relay system in catalysis. The N-linked (GlcNAc...) asparagine glycan is linked to asparagine 677.

The protein belongs to the peptidase S8 family. In terms of assembly, heterodimer between p54 form and prodomain p31; the interaction inhibits p54 catalytic activity. Heterodimer p31-p54 is monomeric at basic pH and dimeric at acidic pH; dimerization is driven by the N-terminal prodomain (p31). It depends on Ca(2+) as a cofactor. In terms of processing, the prodomain (p31) is cleaved, probably by autocatalysis, during the transport to or in the Golgi apparatus, and remains non-covalently associated with the p54 form as an inhibitor. p54 is further cleaved into the p47 form. This cleavage is likely occurring in the exoneme prior to egress and is mediated by PMX/plasmepsin X. The p54-to-p47 conversion can be also autocatalytic. Heterodimer p31-p54 is activated by cleavage of prodomain (p31) by the aspartic protease PMX; cleavage by PMX abolishes inhibitory capacity of p31. Primary autocatalytic processing of SUB1 is essential for parasite growth; the p54-to-p47 conversion is dispensable for SUB1 functions in the parasites. Post-translationally, the disulfide bond between Cys-523 and Cys-536 acts as a redox-sensitive disulfide switch. The oxidized form is required for catalytic activity. The relevance of N-glycosylation is not clear. In an insect expression system, SUB1 glycosylation appears to affect its processing into the active mature form suggesting that SUB1 may not be N-glycosylated in parasites.

The protein resides in the secreted. The protein localises to the parasitophorous vacuole lumen. The enzyme catalyses Hydrolysis of proteins with broad specificity for peptide bonds, and a preference for a large uncharged residue in P1. Hydrolyzes peptide amides.. With respect to regulation, p54 and probably p47 forms are inhibited by the non-covalent interaction with the cleaved propeptide. Inhibited by subtilisin propeptide-like protein SUB1-ProM. Inhibited by 3,4-dichloroisocoumarin (DCI) and 4-(hydroxymercuri)benzoic acid (pHMB). Partially inhibited by chymostatin, leupeptin, phenylmethylsulfonyl fluoride (PMSF), and 4-(2-aminoethyl)benzenesulfonyl fluoride. Functionally, serine protease which plays an essential role in merozoite invasion of and egress from host erythrocytes by processing and activating various merozoite surface and parasitophorous vacuole proteins. Mediates the proteolytic maturation of serine proteases SERA4, SERA5 and SERA6 just prior to merozoite egress. Prior to merozoite egress, cleaves merozoite surface proteins MSP1, MSP6 and MSP7, which form the MSP1/6/7 complex, and thereby may prime the parasite cell surface for invasion of fresh erythrocytes. Prior to merozoite egress, cleaves MSRP2 converting it to MSRP2 p25 form, and RAP1 converting it to RAP1 p67 form. In Plasmodium falciparum, this protein is Subtilisin-like protease 1.